A 2329-amino-acid polypeptide reads, in one-letter code: Pre-mRNA-splicing factor 8 homolog (2329 aa).

The interval 1-53 (MANYGGHPQTEPHAIPDSILEEKSRKWKQLQGKRYSEKKKFGMSDTQKEEMPP) is disordered. Over residues 34–53 (RYSEKKKFGMSDTQKEEMPP) the composition is skewed to basic and acidic residues. The interval 804-1295 (TTVHWLESRR…KIQTRIKIGL (492 aa)) is reverse transcriptase homology domain. The interval 1296–1570 (NSKMPSRFPP…TLKISLIQIF (275 aa)) is linker. The important for branch point selection stretch occupies residues 1506–1519 (MKFKKLTNAQRSGL). Positions 1574–1745 (LWQKIHESVV…LRERIRKGLQ (172 aa)) are restriction endonuclease homology domain. The interval 1760 to 2013 (NYGELFSNQI…ILGMEISAPS (254 aa)) is RNase H homology domain. The MPN domain maps to 2096–2227 (TYILPKNILK…LTAYKLTPSG (132 aa)).

Part of the U5 snRNP complex and of the U4/U6-U5 tri-snRNP complex.

The protein localises to the nucleus. Its function is as follows. Functions as a scaffold that mediates the ordered assembly of spliceosomal proteins and snRNAs. Required for the assembly of the U4/U6-U5 tri-snRNP complex. Functions as a scaffold that positions spliceosomal U2, U5 and U6 snRNAs at splice sites on pre-mRNA substrates, so that splicing can occur. Interacts with both the 5' and the 3' splice site. In Caenorhabditis elegans, this protein is Pre-mRNA-splicing factor 8 homolog (prp-8).